The sequence spans 179 residues: Shikimate kinase (179 aa).

11–16 (GAGKTT) serves as a coordination point for ATP. Residue T15 participates in Mg(2+) binding. Positions 33, 57, and 79 each coordinate substrate. An ATP-binding site is contributed by R118. A substrate-binding site is contributed by R140.

This sequence belongs to the shikimate kinase family. As to quaternary structure, monomer. It depends on Mg(2+) as a cofactor.

It localises to the cytoplasm. It carries out the reaction shikimate + ATP = 3-phosphoshikimate + ADP + H(+). It functions in the pathway metabolic intermediate biosynthesis; chorismate biosynthesis; chorismate from D-erythrose 4-phosphate and phosphoenolpyruvate: step 5/7. In terms of biological role, catalyzes the specific phosphorylation of the 3-hydroxyl group of shikimic acid using ATP as a cosubstrate. This is Shikimate kinase from Bacteroides fragilis (strain ATCC 25285 / DSM 2151 / CCUG 4856 / JCM 11019 / LMG 10263 / NCTC 9343 / Onslow / VPI 2553 / EN-2).